Consider the following 130-residue polypeptide: MFDGLSTYKSFFLVAFGAVPGAICRMKISDNLFRNKHNLWGILLVNSSACLLLGFFLAKQNYIHYINNDQPLYLLLCVGFLGSFSTFSSLILEIYYLFVDQQWMELFLFTFTSIGLGIIFISLGSHLFNA.

4 helical membrane-spanning segments follow: residues 4 to 24 (GLST…GAIC), 38 to 58 (NLWG…FFLA), 72 to 92 (LYLL…SLIL), and 103 to 123 (WMEL…FISL). Residues Gly-82 and Ser-85 each contribute to the Na(+) site.

Belongs to the fluoride channel Fluc/FEX (TC 1.A.43) family.

It is found in the cell inner membrane. The catalysed reaction is fluoride(in) = fluoride(out). Na(+) is not transported, but it plays an essential structural role and its presence is essential for fluoride channel function. Fluoride-specific ion channel. Important for reducing fluoride concentration in the cell, thus reducing its toxicity. The polypeptide is Fluoride-specific ion channel FluC 2 (Prochlorococcus marinus (strain SARG / CCMP1375 / SS120)).